A 691-amino-acid chain; its full sequence is T-box transcription factor TBX2-B (691 aa).

The T-box DNA-binding region spans 104 to 277 (LWDQFHKIGT…HNPFAKGFRD (174 aa)). Disordered regions lie at residues 301-440 (CKAD…SLSK) and 612-691 (NLLT…ESPK). The segment covering 325–335 (HSPLSAAPSPL) has biased composition (low complexity). Basic and acidic residues-rich tracts occupy residues 340–361 (TNREEKFGADSDQELDRREVRS), 378–402 (RLEDRGKDKSTPEKKSDSPESRKDG), and 415–433 (SLEKDKVESRRKEDSKSDP). Residues 624 to 639 (PGSESSKPGSSRESSP) show a composition bias toward low complexity. A coiled-coil region spans residues 659 to 684 (SMKDSINELQRIQRLVSGLERQREVS). Basic and acidic residues predominate over residues 678 to 691 (ERQREVSPGRESPK).

As to quaternary structure, binds DNA as a monomer.

Its subcellular location is the nucleus. Its function is as follows. Transcription factor which acts as a transcriptional repressor. May also function as a transcriptional activator. Binds to the palindromic T site 5'-TTCACACCTAGGTGTGAA-3' DNA sequence, or a half-site, which are present in the regulatory region of several genes. The sequence is that of T-box transcription factor TBX2-B (tbx2-b) from Xenopus laevis (African clawed frog).